A 522-amino-acid chain; its full sequence is Peptide chain release factor 3 (522 aa).

Residues 9-276 enclose the tr-type G domain; the sequence is KKRRTFAIIS…SFVNLAPAPQ (268 aa). Residues 18–25, 86–90, and 140–143 each bind GTP; these read SHPDAGKT, DTPGH, and NKLD.

The protein belongs to the TRAFAC class translation factor GTPase superfamily. Classic translation factor GTPase family. PrfC subfamily.

Its subcellular location is the cytoplasm. Functionally, increases the formation of ribosomal termination complexes and stimulates activities of RF-1 and RF-2. It binds guanine nucleotides and has strong preference for UGA stop codons. It may interact directly with the ribosome. The stimulation of RF-1 and RF-2 is significantly reduced by GTP and GDP, but not by GMP. The polypeptide is Peptide chain release factor 3 (Lactobacillus johnsonii (strain CNCM I-12250 / La1 / NCC 533)).